A 452-amino-acid polypeptide reads, in one-letter code: MGFNIAMLCDFFYPQLGGVEFHIYHLSQKLIDLGHSVVIITHAYKDRVGVRHLTNGLKVYHVPFFVIFRETTFPTVFSTFPIIRNILLREQIQIVHSHGSASTFAHEGILHANTMGLRTVFTDHSLYGFNNLTSIWVNKLLTFTLTNIDRVICVSNTCKENMIVRTELSPDIISVIPNAVVSEDFKPRDPTGGTKRKQSRDKIVIVVIGRLFPNKGSDLLTRIIPKVCSSHEDVEFIVAGDGPKFIDFQQMIESHRLQKRVQLLGSVPHEKVRDVLCQGDIYLHASLTEAFGTILVEAASCNLLIVTTQVGGIPEVLPNEMTVYAEQTSVSDLVQATNKAINIIRSKALDTSSFHDSVSKMYDWMDVAKRTVEIYTNISSTSSADDKDWMKMVANLYKRDGIWAKHLYLLCGIVEYMLFFLLEWLYPRDEIDLAPKWPKKTVSNETKEARET.

The helical transmembrane segment at 407–427 (LYLLCGIVEYMLFFLLEWLYP) threads the bilayer.

It belongs to the glycosyltransferase group 1 family. As to quaternary structure, component of the phosphatidylinositol N-acetylglucosaminyltransferase complex composed of at least GPI1, GPI2, GPI3, GPI15, GPI19 and ERI1.

It localises to the endoplasmic reticulum membrane. It catalyses the reaction a 1,2-diacyl-sn-glycero-3-phospho-(1D-myo-inositol) + UDP-N-acetyl-alpha-D-glucosamine = a 6-(N-acetyl-alpha-D-glucosaminyl)-1-(1,2-diacyl-sn-glycero-3-phospho)-1D-myo-inositol + UDP + H(+). It functions in the pathway glycolipid biosynthesis; glycosylphosphatidylinositol-anchor biosynthesis. Its activity is regulated as follows. Inhibited by Ras, probably via the interaction between RAS2 and ERI1. Catalytic subunit in the complex catalyzing the transfer of N-acetylglucosamine from UDP-N-acetylglucosamine to phosphatidylinositol, the first step of GPI biosynthesis. This chain is Phosphatidylinositol N-acetylglucosaminyltransferase GPI3 subunit (SPT14), found in Saccharomyces cerevisiae (strain RM11-1a) (Baker's yeast).